The following is a 251-amino-acid chain: Triosephosphate isomerase (251 aa).

9–11 (NWK) is a binding site for substrate. Histidine 95 acts as the Electrophile in catalysis. Glutamate 167 serves as the catalytic Proton acceptor. Substrate is bound by residues glycine 173, serine 213, and 234 to 235 (GG). Serine 213 is subject to Phosphoserine.

This sequence belongs to the triosephosphate isomerase family. In terms of assembly, homodimer.

The protein resides in the cytoplasm. It catalyses the reaction D-glyceraldehyde 3-phosphate = dihydroxyacetone phosphate. It functions in the pathway carbohydrate biosynthesis; gluconeogenesis. The protein operates within carbohydrate degradation; glycolysis; D-glyceraldehyde 3-phosphate from glycerone phosphate: step 1/1. In terms of biological role, involved in the gluconeogenesis. Catalyzes stereospecifically the conversion of dihydroxyacetone phosphate (DHAP) to D-glyceraldehyde-3-phosphate (G3P). The sequence is that of Triosephosphate isomerase from Priestia megaterium (strain DSM 319 / IMG 1521) (Bacillus megaterium).